A 277-amino-acid polypeptide reads, in one-letter code: Carbonyl reductase [NADPH] 1 (277 aa).

NADP(+) is bound by residues Val-10 to Val-34, Asp-63 to Ile-64, and Asn-90. At Ser-30 the chain carries Phosphoserine. Glutathione contacts are provided by residues Phe-95–Val-97 and Gln-106. A substrate-binding site is contributed by Ser-140. Ala-193–Tyr-194 lines the glutathione pocket. The Proton acceptor role is filled by Tyr-194. NADP(+)-binding positions include Tyr-194–Lys-198 and Val-231–Thr-233.

It belongs to the short-chain dehydrogenases/reductases (SDR) family. As to quaternary structure, monomer.

Its subcellular location is the cytoplasm. It catalyses the reaction a secondary alcohol + NADP(+) = a ketone + NADPH + H(+). It carries out the reaction prostaglandin F2alpha + NADP(+) = prostaglandin E2 + NADPH + H(+). The catalysed reaction is prostaglandin E1 + NADP(+) = 15-oxoprostaglandin E1 + NADPH + H(+). The enzyme catalyses prostaglandin D2 + NADP(+) = 15-oxoprostaglandin D2 + NADPH + H(+). It catalyses the reaction menadione + NADPH + H(+) = menadiol + NADP(+). It carries out the reaction prostaglandin E2 + NADP(+) = 15-oxoprostaglandin E2 + NADPH + H(+). The catalysed reaction is prostaglandin F2alpha + NADP(+) = 15-oxoprostaglandin F2alpha + NADPH + H(+). The enzyme catalyses daunorubicin + NADPH + H(+) = 13-dihydrodaunorubicin + NADP(+). It catalyses the reaction S-nitrosoglutathione + NADPH + H(+) = S-(hydroxysulfenamide)glutathione + NADP(+). It carries out the reaction a primary alcohol + NADP(+) = an aldehyde + NADPH + H(+). The catalysed reaction is cortisol + NADPH + H(+) = 20beta-dihydrocortisol + NADP(+). The enzyme catalyses corticosterone + NADPH + H(+) = 20beta-dihydrocorticosterone + NADP(+). Its function is as follows. NADPH-dependent reductase with broad substrate specificity. Catalyzes the reduction of a wide variety of carbonyl compounds including quinones, prostaglandins, menadione, plus various xenobiotics. Catalyzes the reduction of the antitumor anthracyclines doxorubicin and daunorubicin to the cardiotoxic compounds doxorubicinol and daunorubicinol. Can convert prostaglandin E to prostaglandin F2-alpha. Can bind glutathione, which explains its higher affinity for glutathione-conjugated substrates. Catalyzes the reduction of S-nitrosoglutathione. In addition, participates in the glucocorticoid metabolism by catalyzing the NADPH-dependent cortisol/corticosterone into 20beta-dihydrocortisol (20b-DHF) or 20beta-corticosterone (20b-DHB), which are weak agonists of NR3C1 and NR3C2 in adipose tissue. This chain is Carbonyl reductase [NADPH] 1, found in Macaca fascicularis (Crab-eating macaque).